The sequence spans 348 residues: MKNTFNTSNVFASAYSFWGSFIGFILSTSNRLYIGWFGILMFPLLVLATVAYIAAFIFAPPVDIDGIREPVAGALLYGNNIISGAVIPSSNAIGVHFYPVWEALGFDEWLYNGGTYQFVVLHFIFGAGAYMGREWEFSFRLGMRPWIFVAFSAPLVAASAVFIVYPIGQGSFSDGMPLGISGTFNFMLVFQAEHNILMHPFHILGVAAVFGGSLFSAMHGSLVTSSLLAETAGDLSLNIGYNFGQEDETYSISAAHGYFGRLIFQYASFNNSRSLHFFLAAWPVIGIWFTSLGVSTMAFNLNGLNFNQSIIDSSGHLINSWADIVNRADLGMEVMHERNAHNFPLDLA.

3 helical membrane passes run 33-50 (YIGW…LATV), 122-137 (HFIF…EWEF), and 146-160 (WIFV…AASA). A chlorophyll a-binding site is contributed by histidine 122. Position 130 (tyrosine 130) interacts with pheophytin a. Residues aspartate 174 and glutamate 193 each contribute to the [CaMn4O5] cluster site. Residues 201 to 222 (FHILGVAAVFGGSLFSAMHGSL) form a helical membrane-spanning segment. Residue histidine 202 coordinates chlorophyll a. A quinone-binding positions include histidine 219 and 268–269 (SF). Residue histidine 219 participates in Fe cation binding. Position 276 (histidine 276) interacts with Fe cation. The helical transmembrane segment at 278–292 (FLAAWPVIGIWFTSL) threads the bilayer. [CaMn4O5] cluster contacts are provided by histidine 336, glutamate 337, aspartate 346, and alanine 348.

Belongs to the reaction center PufL/M/PsbA/D family. As to quaternary structure, PSII is composed of 1 copy each of membrane proteins PsbA, PsbB, PsbC, PsbD, PsbE, PsbF, PsbH, PsbI, PsbJ, PsbK, PsbL, PsbM, PsbT, PsbX, PsbY, PsbZ, Psb30/Ycf12, at least 3 peripheral proteins of the oxygen-evolving complex and a large number of cofactors. It forms dimeric complexes. The cofactor is The D1/D2 heterodimer binds P680, chlorophylls that are the primary electron donor of PSII, and subsequent electron acceptors. It shares a non-heme iron and each subunit binds pheophytin, quinone, additional chlorophylls, carotenoids and lipids. D1 provides most of the ligands for the Mn4-Ca-O5 cluster of the oxygen-evolving complex (OEC). There is also a Cl(-1) ion associated with D1 and D2, which is required for oxygen evolution. The PSII complex binds additional chlorophylls, carotenoids and specific lipids.. Tyr-165 forms a radical intermediate that is referred to as redox-active TyrZ, YZ or Y-Z.

The protein localises to the plastid. It localises to the chloroplast thylakoid membrane. The catalysed reaction is 2 a plastoquinone + 4 hnu + 2 H2O = 2 a plastoquinol + O2. Its function is as follows. Photosystem II (PSII) is a light-driven water:plastoquinone oxidoreductase that uses light energy to abstract electrons from H(2)O, generating O(2) and a proton gradient subsequently used for ATP formation. It consists of a core antenna complex that captures photons, and an electron transfer chain that converts photonic excitation into a charge separation. The D1/D2 (PsbA/PsbD) reaction center heterodimer binds P680, the primary electron donor of PSII as well as several subsequent electron acceptors. The sequence is that of Photosystem II protein D1 from Heterocapsa triquetra (Dinoflagellate).